The following is a 195-amino-acid chain: Thymidine kinase (195 aa).

ATP is bound by residues 15–22 (GSMFSGKS) and 88–91 (DEVQ). Glu89 serves as the catalytic Proton acceptor. Residues Cys145, Cys148, Cys183, and Cys186 each contribute to the Zn(2+) site.

Belongs to the thymidine kinase family. Homotetramer.

The protein localises to the cytoplasm. The enzyme catalyses thymidine + ATP = dTMP + ADP + H(+). The polypeptide is Thymidine kinase (Bacillus cereus (strain AH187)).